The primary structure comprises 105 residues: Pyrimidine/purine nucleoside phosphorylase (105 aa).

This sequence belongs to the nucleoside phosphorylase PpnP family.

The catalysed reaction is a purine D-ribonucleoside + phosphate = a purine nucleobase + alpha-D-ribose 1-phosphate. It carries out the reaction adenosine + phosphate = alpha-D-ribose 1-phosphate + adenine. The enzyme catalyses cytidine + phosphate = cytosine + alpha-D-ribose 1-phosphate. It catalyses the reaction guanosine + phosphate = alpha-D-ribose 1-phosphate + guanine. The catalysed reaction is inosine + phosphate = alpha-D-ribose 1-phosphate + hypoxanthine. It carries out the reaction thymidine + phosphate = 2-deoxy-alpha-D-ribose 1-phosphate + thymine. The enzyme catalyses uridine + phosphate = alpha-D-ribose 1-phosphate + uracil. It catalyses the reaction xanthosine + phosphate = alpha-D-ribose 1-phosphate + xanthine. Its function is as follows. Catalyzes the phosphorolysis of diverse nucleosides, yielding D-ribose 1-phosphate and the respective free bases. Can use uridine, adenosine, guanosine, cytidine, thymidine, inosine and xanthosine as substrates. Also catalyzes the reverse reactions. The chain is Pyrimidine/purine nucleoside phosphorylase from Acidovorax ebreus (strain TPSY) (Diaphorobacter sp. (strain TPSY)).